A 247-amino-acid polypeptide reads, in one-letter code: Exosome complex component Rrp4 (247 aa).

One can recognise an S1 motif domain in the interval Asp-75–Lys-148. Positions Thr-154–Ala-220 constitute a KH domain.

The protein belongs to the RRP4 family. In terms of assembly, component of the archaeal exosome complex. Forms a trimer of Rrp4 and/or Csl4 subunits. The trimer associates with a hexameric ring-like arrangement composed of 3 Rrp41-Rrp42 heterodimers.

The protein localises to the cytoplasm. Its function is as follows. Non-catalytic component of the exosome, which is a complex involved in RNA degradation. Increases the RNA binding and the efficiency of RNA degradation. Confers strong poly(A) specificity to the exosome. This chain is Exosome complex component Rrp4, found in Thermosphaera aggregans (strain DSM 11486 / M11TL).